The primary structure comprises 368 residues: H-2 class I histocompatibility antigen, K-W28 alpha chain (368 aa).

The first 21 residues, 1 to 21 (MAPCMLLLLLAAALAPTQTRA), serve as a signal peptide directing secretion. The segment at 22 to 111 (GPHSLRYFHT…LLRYYNQSAG (90 aa)) is alpha-1. Residues 22-305 (GPHSLRYFHT…EPPPSAVSNT (284 aa)) lie on the Extracellular side of the membrane. Asn-107 is a glycosylation site (N-linked (GlcNAc...) asparagine). The tract at residues 112–203 (GSHTIQRMYG…KNGNATLLRT (92 aa)) is alpha-2. Cys-122 and Cys-185 are disulfide-bonded. The N-linked (GlcNAc...) asparagine glycan is linked to Asn-197. The alpha-3 stretch occupies residues 204–295 (DSPKAHVTHH…GLPKPLTLRW (92 aa)). The Ig-like C1-type domain maps to 206–292 (PKAHVTHHSR…YHQGLPKPLT (87 aa)). Cys-224 and Cys-280 are joined by a disulfide. A connecting peptide region spans residues 296–305 (EPPPSAVSNT). A helical membrane pass occupies residues 306–329 (VIIAVLVVLGAAIVTGAVVAFVMM). The Cytoplasmic portion of the chain corresponds to 330 to 368 (RRRNTGGKGGDYALAPGSQTSDLSLPDCKVMVHDPHSLA). Ser-350 and Ser-353 each carry phosphoserine.

This sequence belongs to the MHC class I family. In terms of assembly, heterodimer of an alpha chain and a beta chain (beta-2-microglobulin).

It is found in the membrane. Functionally, involved in the presentation of foreign antigens to the immune system. This Mus musculus (Mouse) protein is H-2 class I histocompatibility antigen, K-W28 alpha chain (H2-K1).